We begin with the raw amino-acid sequence, 307 residues long: Voltage-dependent anion channel-forming protein sll1024 (307 aa).

4 consecutive transmembrane segments (helical) span residues 26-46 (VIPA…GVTL), 54-74 (FSIP…LLVF), 226-246 (LIFL…HWAT), and 247-267 (AFVV…GVEI).

This sequence belongs to the anion channel-forming bestrophin (TC 1.A.46) family.

It is found in the cell membrane. The chain is Voltage-dependent anion channel-forming protein sll1024 from Synechocystis sp. (strain ATCC 27184 / PCC 6803 / Kazusa).